The chain runs to 285 residues: NAD kinase (285 aa).

Catalysis depends on Asp-66, which acts as the Proton acceptor. NAD(+) contacts are provided by residues 66–67, 137–138, Arg-148, Arg-165, Asp-167, and 178–183; these read DG, ND, and TAYSLS.

The protein belongs to the NAD kinase family. Requires a divalent metal cation as cofactor.

The protein localises to the cytoplasm. It catalyses the reaction NAD(+) + ATP = ADP + NADP(+) + H(+). In terms of biological role, involved in the regulation of the intracellular balance of NAD and NADP, and is a key enzyme in the biosynthesis of NADP. Catalyzes specifically the phosphorylation on 2'-hydroxyl of the adenosine moiety of NAD to yield NADP. This Prosthecochloris aestuarii (strain DSM 271 / SK 413) protein is NAD kinase.